A 558-amino-acid polypeptide reads, in one-letter code: DNA ligase B (558 aa).

K124 (N6-AMP-lysine intermediate) is an active-site residue.

The protein belongs to the NAD-dependent DNA ligase family. LigB subfamily.

It carries out the reaction NAD(+) + (deoxyribonucleotide)n-3'-hydroxyl + 5'-phospho-(deoxyribonucleotide)m = (deoxyribonucleotide)n+m + AMP + beta-nicotinamide D-nucleotide.. Functionally, catalyzes the formation of phosphodiester linkages between 5'-phosphoryl and 3'-hydroxyl groups in double-stranded DNA using NAD as a coenzyme and as the energy source for the reaction. The chain is DNA ligase B from Klebsiella pneumoniae (strain 342).